Reading from the N-terminus, the 163-residue chain is SKP1-like protein 4 (163 aa).

The interaction with the F-box domain of F-box proteins stretch occupies residues 105–163 (ILAANYLNIGGLLDLTCKAVADQMRGKTPEQMRAHFNIKNDYTPEEEAEVRNENKWAFE).

This sequence belongs to the SKP1 family. Part of a SCF (SKP1-cullin-F-box) protein ligase complex. Interacts with At1g56610, At1g67340, At3g62230, At3g59000, At4g27050, At1g55000, SKIP16 and SKIP32. In terms of tissue distribution, mostly expressed in inflorescence and siliques, and, to a lower extent, in seedlings, roots, and stems.

Its subcellular location is the nucleus. It participates in protein modification; protein ubiquitination. Its function is as follows. Involved in ubiquitination and subsequent proteasomal degradation of target proteins. Together with CUL1, RBX1 and a F-box protein, it forms a SCF E3 ubiquitin ligase complex. The functional specificity of this complex depends on the type of F-box protein. In the SCF complex, it serves as an adapter that links the F-box protein to CUL1. The chain is SKP1-like protein 4 (ASK4) from Arabidopsis thaliana (Mouse-ear cress).